A 288-amino-acid chain; its full sequence is Bifunctional protein FolD (288 aa).

NADP(+) is bound by residues 164–166 and isoleucine 230; that span reads GTS.

This sequence belongs to the tetrahydrofolate dehydrogenase/cyclohydrolase family. In terms of assembly, homodimer.

The catalysed reaction is (6R)-5,10-methylene-5,6,7,8-tetrahydrofolate + NADP(+) = (6R)-5,10-methenyltetrahydrofolate + NADPH. It carries out the reaction (6R)-5,10-methenyltetrahydrofolate + H2O = (6R)-10-formyltetrahydrofolate + H(+). The protein operates within one-carbon metabolism; tetrahydrofolate interconversion. In terms of biological role, catalyzes the oxidation of 5,10-methylenetetrahydrofolate to 5,10-methenyltetrahydrofolate and then the hydrolysis of 5,10-methenyltetrahydrofolate to 10-formyltetrahydrofolate. This chain is Bifunctional protein FolD, found in Mycoplasma mycoides subsp. mycoides SC (strain CCUG 32753 / NCTC 10114 / PG1).